The primary structure comprises 431 residues: Glycerol-3-phosphate dehydrogenase [NAD(P)+] (431 aa).

Over residues 1-19 (MTSANDKSTDTNVDSTQAE) the composition is skewed to polar residues. The segment at 1–25 (MTSANDKSTDTNVDSTQAEQKMAEK) is disordered. Ser79, Phe80, Arg100, and Lys173 together coordinate NADPH. Residues Lys173 and Gly201 each coordinate sn-glycerol 3-phosphate. Ala205 provides a ligand contact to NADPH. Residues Lys256, Asp309, Ser319, Arg320, and Asn321 each coordinate sn-glycerol 3-phosphate. The active-site Proton acceptor is Lys256. Arg320 lines the NADPH pocket. Glu346 is an NADPH binding site.

This sequence belongs to the NAD-dependent glycerol-3-phosphate dehydrogenase family.

The protein resides in the cytoplasm. It catalyses the reaction sn-glycerol 3-phosphate + NAD(+) = dihydroxyacetone phosphate + NADH + H(+). It carries out the reaction sn-glycerol 3-phosphate + NADP(+) = dihydroxyacetone phosphate + NADPH + H(+). The protein operates within membrane lipid metabolism; glycerophospholipid metabolism. Its function is as follows. Catalyzes the reduction of the glycolytic intermediate dihydroxyacetone phosphate (DHAP) to sn-glycerol 3-phosphate (G3P), the key precursor for phospholipid synthesis. The protein is Glycerol-3-phosphate dehydrogenase [NAD(P)+] of Psychrobacter arcticus (strain DSM 17307 / VKM B-2377 / 273-4).